The chain runs to 400 residues: Phosphoglycerate kinase (400 aa).

Residues 21 to 23, R36, 59 to 62, R114, and R147 each bind substrate; these read DLN and HLGR. Residues K202, E329, and 355–358 contribute to the ATP site; that span reads GGDT.

The protein belongs to the phosphoglycerate kinase family. Monomer.

It localises to the cytoplasm. It carries out the reaction (2R)-3-phosphoglycerate + ATP = (2R)-3-phospho-glyceroyl phosphate + ADP. Its pathway is carbohydrate degradation; glycolysis; pyruvate from D-glyceraldehyde 3-phosphate: step 2/5. The sequence is that of Phosphoglycerate kinase from Psychrobacter cryohalolentis (strain ATCC BAA-1226 / DSM 17306 / VKM B-2378 / K5).